The sequence spans 539 residues: MHNSGGQSGWNLSGEERKPFSNYGRNNQQRRSSGGGGRGSHSQNRAANGNWPDAGSEGGQNGNAFNKFRDPQQELDNHQPNKRGGRRNRGGGGGGGGWGGRRGNRGRDSNRRGGRNNSWQPKDQHVSPGQSNMLYFDNVGDFTEDPPLPRSSPAPSSLRQESLPPVTFAADLTPPPPVSVAPPDVAVTPEEPTVPLINIKKEKEMEHKSKIKQFVKAEPKSPKKKKVNSSRSSSTSGEESEPEPGEMVVNTKAVVVPSPKAKAIKTPVASTPKPKAVKPVSSSDSSTSDSDTDDEQSHPPAKSKKMEKNTEEDVVCMGSQERQFTITDEEESTEPEDDKKARKQKNKGKTVDVCGICDKKGHTSFQCQMICRNCSGSYHGLKNCPNPPNLNIAIQSFVEFAMQQMTAFHCEQGFGFPAGTVTAPVSAKPKKDKKASIKKIKKSSQKRMKVEPKDHDEEDDEEDDDEDEDDSSESDDSESSEEPHPAPVSKQKRKRGTKASVSAAASLPPQVFPFPLLGAPGAPFNSMMYSYRAPFNFSK.

Positions 1–11 are enriched in polar residues; the sequence is MHNSGGQSGWN. Residues 1–345 form a disordered region; it reads MHNSGGQSGW…EDDKKARKQK (345 aa). The span at 67–79 shows a compositional bias: basic and acidic residues; sequence KFRDPQQELDNHQ. Basic residues predominate over residues 80–89; sequence PNKRGGRRNR. Residues 90–101 show a composition bias toward gly residues; it reads GGGGGGGGWGGR. Residues 199-208 show a composition bias toward basic and acidic residues; it reads IKKEKEMEHK. Low complexity predominate over residues 268 to 289; sequence VASTPKPKAVKPVSSSDSSTSD. A phosphoserine mark is found at Ser288 and Ser290. Phosphothreonine is present on residues Thr292 and Thr327. Residues 327–336 show a composition bias toward acidic residues; that stretch reads TDEEESTEPE. Phosphoserine is present on Ser332. Thr333 is modified (phosphothreonine). 2 consecutive CCHC-type zinc fingers follow at residues 354-367 and 371-386; these read CGIC…SFQC and CRNC…NCPN. Residues 421–513 are disordered; the sequence is VTAPVSAKPK…AASLPPQVFP (93 aa). Over residues 428-447 the composition is skewed to basic residues; sequence KPKKDKKASIKKIKKSSQKR. The span at 456 to 480 shows a compositional bias: acidic residues; sequence DEEDDEEDDDEDEDDSSESDDSESS.

In terms of processing, may be phosphorylated in vivo by CkIIalpha. mbm and CkIIalpha colocalize to the nucleolus and mbm is phosphorylated in vitro by CkIIalpha. As to expression, shows widespread expression in third instar larval brain with no apparent difference between males and females (at protein level). Detected at low levels in the mushroom body neuropil and is also expressed in many cells of the brain outside the mushroom body (at protein level). Not detected in third instar larval brain cells in anaphase (at protein level).

Its subcellular location is the nucleus. The protein resides in the nucleolus. It localises to the cytoplasm. Required for small ribosomal subunit biogenesis in neuroblasts. Plays a role in mushroom body development. This Drosophila melanogaster (Fruit fly) protein is Protein mushroom body miniature.